A 965-amino-acid chain; its full sequence is Valine--tRNA ligase (965 aa).

The disordered stretch occupies residues 1 to 22; the sequence is MENTPSHINKTEPSLDKTYSPQ. The 'HIGH' region motif lies at 56-66; sequence PNVTGSLHMGH. Positions 568-572 match the 'KMSKS' region motif; sequence KMSKS. Residue Lys571 coordinates ATP. A coiled-coil region spans residues 896–965; sequence LIDKATELDR…IEQQATIAAL (70 aa).

The protein belongs to the class-I aminoacyl-tRNA synthetase family. ValS type 1 subfamily. As to quaternary structure, monomer.

Its subcellular location is the cytoplasm. It carries out the reaction tRNA(Val) + L-valine + ATP = L-valyl-tRNA(Val) + AMP + diphosphate. Its function is as follows. Catalyzes the attachment of valine to tRNA(Val). As ValRS can inadvertently accommodate and process structurally similar amino acids such as threonine, to avoid such errors, it has a 'posttransfer' editing activity that hydrolyzes mischarged Thr-tRNA(Val) in a tRNA-dependent manner. In Yersinia pestis, this protein is Valine--tRNA ligase.